The following is a 187-amino-acid chain: Lipid A acyltransferase PagP (187 aa).

Residues 1 to 26 (MIVAKKYFLVLSFLFVQFALLPQAFS) form the signal peptide. Active-site residues include histidine 59, aspartate 102, and serine 103.

The protein belongs to the lipid A palmitoyltransferase family. Homodimer.

It is found in the cell outer membrane. The catalysed reaction is a lipid A + a 1,2-diacyl-sn-glycero-3-phosphocholine = a hepta-acyl lipid A + a 2-acyl-sn-glycero-3-phosphocholine. It carries out the reaction a lipid IVA + a 1,2-diacyl-sn-glycero-3-phosphocholine = a lipid IVB + a 2-acyl-sn-glycero-3-phosphocholine. It catalyses the reaction a lipid IIA + a 1,2-diacyl-sn-glycero-3-phosphocholine = a lipid IIB + a 2-acyl-sn-glycero-3-phosphocholine. Its function is as follows. Transfers a fatty acid residue from the sn-1 position of a phospholipid to the N-linked hydroxyfatty acid chain on the proximal unit of lipid A or its precursors. The protein is Lipid A acyltransferase PagP of Citrobacter koseri (strain ATCC BAA-895 / CDC 4225-83 / SGSC4696).